Consider the following 117-residue polypeptide: UPF0102 protein YPN_3432 (117 aa).

The protein belongs to the UPF0102 family.

This chain is UPF0102 protein YPN_3432, found in Yersinia pestis bv. Antiqua (strain Nepal516).